A 64-amino-acid polypeptide reads, in one-letter code: Short neurotoxin 1 (64 aa).

Cystine bridges form between C3–C26, C20–C43, C45–C56, and C57–C62.

The protein belongs to the three-finger toxin family. Short-chain subfamily. Type I alpha-neurotoxin sub-subfamily. As to expression, expressed by the venom gland.

It localises to the secreted. In terms of biological role, binds to muscle nicotinic acetylcholine receptor (nAChR) and inhibit acetylcholine from binding to the receptor, thereby impairing neuromuscular transmission. This is Short neurotoxin 1 from Bungarus fasciatus (Banded krait).